The following is a 447-amino-acid chain: KICSTOR complex protein ITFG2 (447 aa).

The stretch at 19 to 48 is one FG-GAP 1; atypical repeat; it reads FPHAICLGDVDNDTLNELVVGDTSGKVSVY. Phosphoserine is present on Ser104. The FG-GAP 2; atypical repeat unit spans residues 126 to 155; sequence NTKVMLISDIDGDGCRELVVGYTDRVVRAF. Ser220 carries the post-translational modification Phosphoserine.

In terms of assembly, part of the KICSTOR complex composed of KPTN, ITFG2, KICS2 and SZT2. SZT2 probably serves as a link between the other three proteins in the KICSTOR complex and may mediate the direct interaction with the GATOR complex via GATOR1. The KICSTOR complex interacts directly with the GATOR1 complex and most probably indirectly with the GATOR2 complex in an amino acid-independent manner.

The protein resides in the lysosome membrane. Functionally, as part of the KICSTOR complex functions in the amino acid-sensing branch of the TORC1 signaling pathway. Recruits, in an amino acid-independent manner, the GATOR1 complex to the lysosomal membranes and allows its interaction with GATOR2 and the RAG GTPases. Functions upstream of the RAG GTPases and is required to negatively regulate mTORC1 signaling in absence of amino acids. In absence of the KICSTOR complex mTORC1 is constitutively localized to the lysosome and activated. The KICSTOR complex is also probably involved in the regulation of mTORC1 by glucose. The polypeptide is KICSTOR complex protein ITFG2 (Homo sapiens (Human)).